The following is a 442-amino-acid chain: Trigger factor (442 aa).

A PPIase FKBP-type domain is found at 163 to 248 (YDRVTINYCI…IIKIEKKQEL (86 aa)).

This sequence belongs to the FKBP-type PPIase family. Tig subfamily.

It is found in the cytoplasm. The enzyme catalyses [protein]-peptidylproline (omega=180) = [protein]-peptidylproline (omega=0). In terms of biological role, involved in protein export. Acts as a chaperone by maintaining the newly synthesized protein in an open conformation. Functions as a peptidyl-prolyl cis-trans isomerase. This is Trigger factor from Buchnera aphidicola subsp. Acyrthosiphon pisum (strain 5A).